We begin with the raw amino-acid sequence, 154 residues long: uncharacterized protein (154 aa).

It is found in the mitochondrion. This is an uncharacterized protein from Marchantia polymorpha (Common liverwort).